Consider the following 571-residue polypeptide: Potassium-transporting ATPase potassium-binding subunit (571 aa).

Transmembrane regions (helical) follow at residues 5–25, 60–80, 86–106, 131–151, 177–197, 247–267, 291–311, 334–354, 386–406, 425–445, 498–518, and 547–567; these read LAAG…YVPV, YGYA…LYAL, VLPL…NTAV, GLAV…VALI, ILLP…VIQS, PTPV…VSLT, LTLL…TLAA, FGIP…TGAV, GLYG…LLVG, ALSV…TVIL, ALGL…LALA, and GTVV…GPIA.

The protein belongs to the KdpA family. As to quaternary structure, the system is composed of three essential subunits: KdpA, KdpB and KdpC.

The protein resides in the cell membrane. In terms of biological role, part of the high-affinity ATP-driven potassium transport (or Kdp) system, which catalyzes the hydrolysis of ATP coupled with the electrogenic transport of potassium into the cytoplasm. This subunit binds the extracellular potassium ions and delivers the ions to the membrane domain of KdpB through an intramembrane tunnel. This is Potassium-transporting ATPase potassium-binding subunit from Rhodococcus jostii (strain RHA1).